Consider the following 1383-residue polypeptide: Palladin (1383 aa).

3 disordered regions span residues 1–22 (MSGT…EESK), 52–169 (DSET…SQLC), and 183–238 (FKAA…KSPG). Basic and acidic residues predominate over residues 78–96 (HPSHKETKLGEHASRRPQD). The span at 191–201 (RSPNGESSSPD) shows a compositional bias: polar residues. Ser-192 is modified (phosphoserine). The span at 210–223 (QPSALLSASASQSP) shows a compositional bias: low complexity. The Ig-like C2-type 1 domain occupies 271-360 (PRFIQKLRSQ…GSDTTSAEVF (90 aa)). Cysteines 292 and 344 form a disulfide. Ser-401 is modified (phosphoserine). Residues 440–539 (PPVFTKELQN…ATSTAQLVVT (100 aa)) form the Ig-like C2-type 2 domain. Cys-462 and Cys-521 form a disulfide bridge. Positions 562 to 566 (FPPPP) are interaction with VASP. Disordered regions lie at residues 609–653 (ETNG…LAKP), 673–728 (AGAR…SSGS), and 740–846 (AQNL…RFGH). The residue at position 632 (Ser-632) is a Phosphoserine. Thr-635 is modified (phosphothreonine). The residue at position 641 (Ser-641) is a Phosphoserine. The interaction with LASP1 stretch occupies residues 646-676 (PPPLLAKPKLDPLKLQQLQNQIRLEQEAGAR). The interaction with SORBS2, SPIN90 and SRC stretch occupies residues 676 to 696 (RQPPPAPRSAPPSPPFPPPPA). Residues 677 to 697 (QPPPAPRSAPPSPPFPPPPAF) show a composition bias toward pro residues. Residues Ser-684, Ser-688, and Ser-728 each carry the phosphoserine modification. A compositionally biased stretch (low complexity) spans 745–763 (PASGHGTPASSPSSSSLPS). Residues 766-831 (SPTPRQFGRA…PPPPPPLPSP (66 aa)) are interaction with EPS8. The interval 796–831 (SPSPPPPPPPVFSPTAAFPVPDVFPLPPPPPPLPSP) is interaction with SORBS2, SPIN90, SRC and PFN1. Composition is skewed to pro residues over residues 797 to 807 (PSPPPPPPPVF) and 817 to 830 (DVFP…PLPS). Residues 819–823 (FPLPP) form an interaction with VASP region. The segment covering 832–846 (GQASHCSSPATRFGH) has biased composition (polar residues). The interaction with ACTN stretch occupies residues 833-890 (QASHCSSPATRFGHSQTPAAFLSALLPSQPPPAAVNALGLPKGVTPAGFPKKASRTAR). Phosphoserine is present on residues Ser-893, Ser-979, and Ser-984. One can recognise an Ig-like C2-type 3 domain in the interval 1001–1085 (PFFEMKLKHY…MAANPQGRIS (85 aa)). A disordered region spans residues 1096-1125 (NQRGRSPRSPSGHPHVRRPRSRSRDSGDEN). Residues 1098–1108 (RGRSPRSPSGH) are compositionally biased toward low complexity. Phosphoserine is present on residues Ser-1101, Ser-1104, Ser-1106, and Ser-1116. Position 1118 is a phosphoserine; by PKB/AKT1 (Ser-1118). Phosphoserine is present on Ser-1121. 2 consecutive Ig-like C2-type domains span residues 1135-1226 (PHFL…LVVA) and 1233-1324 (PPVF…ARLD). 2 interaction with EZR regions span residues 1137-1226 (FLQA…LVVA) and 1236-1326 (FIEK…LDVY). A disulfide bridge connects residues Cys-1156 and Cys-1208. Ser-1352 carries the phosphoserine modification.

Belongs to the myotilin/palladin family. As to quaternary structure, interacts with EPS8. Interacts with LASP1. Interacts with VASP. Interacts with ACTN. Interacts with SORBS2. Interacts with PFN1. Interacts with LPP. Interacts with SPIN90. Interacts with SRC. Interacts with EZR. Interacts with RAI14. In terms of processing, phosphorylated predominantly on serines and, to a lesser extent, on tyrosines. Phosphorylation at Ser-1118 by PKB/AKT1 modulates cytoskeletal organization and cell motility. As to expression, detected in both muscle and non-muscle tissues. High expression in prostate, ovary, colon, and kidney. Not detected in spleen, skeletal muscle, lung and peripheral blood lymphocytes (at protein level). Protein is overexpressed in FA6, HPAF, IMIM-PC2, SUIT-2 and PancTu-II sporadic pancreatic cancer cell lines.

The protein localises to the cytoplasm. It is found in the cytoskeleton. The protein resides in the cell junction. It localises to the focal adhesion. Its subcellular location is the myofibril. The protein localises to the sarcomere. It is found in the z line. The protein resides in the cell projection. It localises to the ruffle. Its subcellular location is the podosome. The protein localises to the lamellipodium. It is found in the axon. The protein resides in the growth cone. In terms of biological role, cytoskeletal protein required for organization of normal actin cytoskeleton. Roles in establishing cell morphology, motility, cell adhesion and cell-extracellular matrix interactions in a variety of cell types. May function as a scaffolding molecule with the potential to influence both actin polymerization and the assembly of existing actin filaments into higher-order arrays. Binds to proteins that bind to either monomeric or filamentous actin. Localizes at sites where active actin remodeling takes place, such as lamellipodia and membrane ruffles. Different isoforms may have functional differences. Involved in the control of morphological and cytoskeletal changes associated with dendritic cell maturation. Involved in targeting ACTN to specific subcellular foci. This Homo sapiens (Human) protein is Palladin (PALLD).